The chain runs to 548 residues: Hydroxylamine reductase (548 aa).

Residues C3, C6, C15, and C21 each contribute to the [4Fe-4S] cluster site. Hybrid [4Fe-2O-2S] cluster-binding residues include H240, E264, C308, C402, C430, C455, E490, and K492. C402 carries the cysteine persulfide modification.

The protein belongs to the HCP family. The cofactor is [4Fe-4S] cluster. Hybrid [4Fe-2O-2S] cluster is required as a cofactor.

It localises to the cytoplasm. It catalyses the reaction A + NH4(+) + H2O = hydroxylamine + AH2 + H(+). Its function is as follows. Catalyzes the reduction of hydroxylamine to form NH(3) and H(2)O. This is Hydroxylamine reductase from Parabacteroides distasonis (strain ATCC 8503 / DSM 20701 / CIP 104284 / JCM 5825 / NCTC 11152).